Consider the following 220-residue polypeptide: MVPVNNSPVTIARRGLMLVISSPSGAGKSTIARNLLEKDKNISLSVSVTTRPRRQSEIEGIHYHFISKRDFERMRDGDELLEWAEVHGNFYGTPREPVEAAMAAGRDMLFDIDWQGAEQLQDKMKADVVSIFILPPTMTELQSRLHRRAEDSEEVIKTRLLNSRAEIEHWRDYDYVILNDDLQAAFEGIEAIVKAERVRRDRRHGMFDFVRSLLEEEPKL.

Residues 15–194 (GLMLVISSPS…AFEGIEAIVK (180 aa)) enclose the Guanylate kinase-like domain. 22–29 (SPSGAGKS) is a binding site for ATP.

Belongs to the guanylate kinase family.

Its subcellular location is the cytoplasm. The enzyme catalyses GMP + ATP = GDP + ADP. Essential for recycling GMP and indirectly, cGMP. This is Guanylate kinase from Agrobacterium fabrum (strain C58 / ATCC 33970) (Agrobacterium tumefaciens (strain C58)).